The sequence spans 157 residues: UPF0251 protein CLM_1546 (157 aa).

It belongs to the UPF0251 family.

In Clostridium botulinum (strain Kyoto / Type A2), this protein is UPF0251 protein CLM_1546.